A 621-amino-acid chain; its full sequence is Acetolactate synthase (621 aa).

Positions 1 to 19 (MSAPTRRPAPDAPGAAGIA) are enriched in low complexity. The interval 1–39 (MSAPTRRPAPDAPGAAGIAPAPPAPAAKPAAGKPKRIGP) is disordered. Residue E89 participates in thiamine diphosphate binding. Residues R190, 296-317 (HGTV…LGTR), and 339-358 (DIDP…IVGD) contribute to the FAD site. The segment at 432-512 (HDQMWAAQFI…IKVALINNGN (81 aa)) is thiamine pyrophosphate binding. D483 and N510 together coordinate Mg(2+).

The protein belongs to the TPP enzyme family. Mg(2+) is required as a cofactor. It depends on thiamine diphosphate as a cofactor.

It catalyses the reaction 2 pyruvate + H(+) = (2S)-2-acetolactate + CO2. It functions in the pathway amino-acid biosynthesis; L-isoleucine biosynthesis; L-isoleucine from 2-oxobutanoate: step 1/4. The protein operates within amino-acid biosynthesis; L-valine biosynthesis; L-valine from pyruvate: step 1/4. The sequence is that of Acetolactate synthase (ilvB) from Mycobacterium avium.